The following is a 610-amino-acid chain: UvrABC system protein C (610 aa).

The GIY-YIG domain occupies 16 to 94; the sequence is SQPGVYRMYD…IQRYQPRYNV (79 aa). The 36-residue stretch at 204–239 folds into the UVR domain; it reads SQVIEGLIKRMEEASQALRFEEAARIRDQIHAVRQV.

It belongs to the UvrC family. In terms of assembly, interacts with UvrB in an incision complex.

The protein resides in the cytoplasm. In terms of biological role, the UvrABC repair system catalyzes the recognition and processing of DNA lesions. UvrC both incises the 5' and 3' sides of the lesion. The N-terminal half is responsible for the 3' incision and the C-terminal half is responsible for the 5' incision. The chain is UvrABC system protein C from Proteus mirabilis (strain HI4320).